We begin with the raw amino-acid sequence, 1727 residues long: DNA-directed RNA polymerase II subunit rpb1 (1727 aa).

The Zn(2+) site is built by cysteine 66, cysteine 69, cysteine 76, histidine 79, cysteine 106, cysteine 109, cysteine 147, and cysteine 175. The Mg(2+) site is built by aspartate 486, aspartate 488, and aspartate 490. Residues 819–831 are bridging helix; it reads PQEFFFHAMGGRE. Lysine 1266 is covalently cross-linked (Glycyl lysine isopeptide (Lys-Gly) (interchain with G-Cter in ubiquitin)). Disordered regions lie at residues 1478-1512 and 1551-1727; these read EPSN…YDAP and PTYS…NKKK. Polar residues predominate over residues 1480–1505; the sequence is SNVSYPDTPGSQTPSYSYGDGSTTPF. A run of 23 repeats spans residues 1553 to 1559, 1560 to 1566, 1567 to 1573, 1574 to 1580, 1581 to 1587, 1588 to 1594, 1595 to 1601, 1602 to 1608, 1609 to 1615, 1616 to 1622, 1623 to 1629, 1630 to 1636, 1637 to 1643, 1644 to 1650, 1651 to 1657, 1658 to 1664, 1665 to 1671, 1672 to 1678, 1679 to 1685, 1686 to 1692, 1693 to 1699, 1700 to 1706, and 1707 to 1713. Residues 1553 to 1713 are C-terminal domain (CTD); 23 X 7 AA tandem repeats of Y-S-P-[ST]-S-P-[FST]; that stretch reads YSPTSPSYSP…SPSYSPSSPT (161 aa).

It belongs to the RNA polymerase beta' chain family. In terms of assembly, component of the RNA polymerase II (Pol II) complex consisting of 12 subunits. The tandem heptapeptide repeats in the C-terminal domain (CTD) can be highly phosphorylated. The phosphorylation activates Pol II. Phosphorylation occurs mainly at residues 'Ser-2' and 'Ser-5' of the heptapeptide repeat. The phosphorylation state is believed to result from the balanced action of site-specific CTD kinases and phosphatase, and a 'CTD code' that specifies the position of Pol II within the transcription cycle has been proposed. In terms of processing, following transcription stress, the elongating form of RNA polymerase II (RNA pol IIo) is polyubiquitinated via 'Lys-63'-linkages on Lys-1266 at DNA damage sites without leading to degradation: ubiquitination promotes RNA pol IIo backtracking to allow access by the transcription-coupled nucleotide excision repair (TC-NER) machinery. Subsequent DEF1-dependent polyubiquitination by the elongin complex via 'Lys-48'-linkages may lead to proteasome-mediated degradation; presumably at stalled RNA pol II where TC-NER has failed, to halt global transcription and enable 'last resort' DNA repair pathways.

The protein resides in the nucleus. It catalyses the reaction RNA(n) + a ribonucleoside 5'-triphosphate = RNA(n+1) + diphosphate. In terms of biological role, DNA-dependent RNA polymerase catalyzes the transcription of DNA into RNA using the four ribonucleoside triphosphates as substrates. Largest and catalytic component of RNA polymerase II which synthesizes mRNA precursors and many functional non-coding RNAs. Forms the polymerase active center together with the second largest subunit. Pol II is the central component of the basal RNA polymerase II transcription machinery. It is composed of mobile elements that move relative to each other. RPB1 is part of the core element with the central large cleft, the clamp element that moves to open and close the cleft and the jaws that are thought to grab the incoming DNA template. At the start of transcription, a single-stranded DNA template strand of the promoter is positioned within the central active site cleft of Pol II. A bridging helix emanates from RPB1 and crosses the cleft near the catalytic site and is thought to promote translocation of Pol II by acting as a ratchet that moves the RNA-DNA hybrid through the active site by switching from straight to bent conformations at each step of nucleotide addition. During transcription elongation, Pol II moves on the template as the transcript elongates. Elongation is influenced by the phosphorylation status of the C-terminal domain (CTD) of Pol II largest subunit (RPB1), which serves as a platform for assembly of factors that regulate transcription initiation, elongation, termination and mRNA processing. The protein is DNA-directed RNA polymerase II subunit rpb1 (polr2a) of Dictyostelium discoideum (Social amoeba).